The sequence spans 279 residues: MLVIGSGAKHLEGEIKEKAPITNVEIKKFPDGEKYVRILEKGDKAIVVQSTYKPQDEFLIEALLLGDALRENGYRKLKIVIPYMAYSRQDRVTKEGEPISIRAVLKMLGLYYDELYVMDIHNPKTLEFFPGRAENILPSKEIAEYFSDKLGEGIILAPDKGALERAKAIAEILGLEYSHFEKKRISPTEVQMTPVNIDVKGKNVLIVDDIISTGGTMIKATEILRKLGAEKVFVAATHGVFAEGAIERLSKAVDELAVTNTIPTPVSKISIVPEILNLL.

ATP contacts are provided by residues 31-33 and 88-89; these read DGE and RQ. Positions 121 and 159 each coordinate Mg(2+). The active site involves lysine 182. D-ribose 5-phosphate-binding positions include arginine 184, aspartate 208, and 212–216; that span reads STGGT.

The protein belongs to the ribose-phosphate pyrophosphokinase family. Class III (archaeal) subfamily. Mg(2+) serves as cofactor.

It is found in the cytoplasm. It catalyses the reaction D-ribose 5-phosphate + ATP = 5-phospho-alpha-D-ribose 1-diphosphate + AMP + H(+). The protein operates within metabolic intermediate biosynthesis; 5-phospho-alpha-D-ribose 1-diphosphate biosynthesis; 5-phospho-alpha-D-ribose 1-diphosphate from D-ribose 5-phosphate (route I): step 1/1. Functionally, involved in the biosynthesis of the central metabolite phospho-alpha-D-ribosyl-1-pyrophosphate (PRPP) via the transfer of pyrophosphoryl group from ATP to 1-hydroxyl of ribose-5-phosphate (Rib-5-P). The polypeptide is Ribose-phosphate pyrophosphokinase (Pyrococcus furiosus (strain ATCC 43587 / DSM 3638 / JCM 8422 / Vc1)).